The sequence spans 149 residues: D-aminoacyl-tRNA deacylase (149 aa).

The Gly-cisPro motif, important for rejection of L-amino acids motif lies at 137–138; sequence GP.

The protein belongs to the DTD family. In terms of assembly, homodimer.

The protein resides in the cytoplasm. It catalyses the reaction glycyl-tRNA(Ala) + H2O = tRNA(Ala) + glycine + H(+). The enzyme catalyses a D-aminoacyl-tRNA + H2O = a tRNA + a D-alpha-amino acid + H(+). Its function is as follows. An aminoacyl-tRNA editing enzyme that deacylates mischarged D-aminoacyl-tRNAs. Also deacylates mischarged glycyl-tRNA(Ala), protecting cells against glycine mischarging by AlaRS. Acts via tRNA-based rather than protein-based catalysis; rejects L-amino acids rather than detecting D-amino acids in the active site. By recycling D-aminoacyl-tRNA to D-amino acids and free tRNA molecules, this enzyme counteracts the toxicity associated with the formation of D-aminoacyl-tRNA entities in vivo and helps enforce protein L-homochirality. In Desulforamulus reducens (strain ATCC BAA-1160 / DSM 100696 / MI-1) (Desulfotomaculum reducens), this protein is D-aminoacyl-tRNA deacylase.